The sequence spans 1075 residues: Carbamoyl phosphate synthase large chain (1075 aa).

Residues 2-403 (PKRTDIKSIL…SLQKALRGLE (402 aa)) are carboxyphosphate synthetic domain. ATP is bound by residues Arg129, Arg169, Gly175, Gly176, Glu208, Leu210, Glu215, Gly241, Ile242, His243, Gln285, and Glu299. Positions 133 to 328 (DIAMKKIGLD…IAKVAAKLAV (196 aa)) constitute an ATP-grasp 1 domain. Positions 285, 299, and 301 each coordinate Mg(2+). Residues Gln285, Glu299, and Asn301 each contribute to the Mn(2+) site. The oligomerization domain stretch occupies residues 404-553 (VGATGFDPKV…YSTYEDECEA (150 aa)). A carbamoyl phosphate synthetic domain region spans residues 554–936 (NPSIDRDKIM…AFAKAQLGSN (383 aa)). The ATP-grasp 2 domain maps to 679-870 (QHAVDRLKLK…LAKVAARVMA (192 aa)). The ATP site is built by Arg715, Arg754, Leu756, Glu761, Gly786, Val787, His788, Ser789, Gln829, and Glu841. Mg(2+) contacts are provided by Gln829, Glu841, and Asn843. Mn(2+)-binding residues include Gln829, Glu841, and Asn843. Residues 937–1075 (STMKKQGRAL…QEMHAQIKKS (139 aa)) form the MGS-like domain. Residues 937–1075 (STMKKQGRAL…QEMHAQIKKS (139 aa)) are allosteric domain.

It belongs to the CarB family. Composed of two chains; the small (or glutamine) chain promotes the hydrolysis of glutamine to ammonia, which is used by the large (or ammonia) chain to synthesize carbamoyl phosphate. Tetramer of heterodimers (alpha,beta)4. It depends on Mg(2+) as a cofactor. Mn(2+) serves as cofactor.

The enzyme catalyses hydrogencarbonate + L-glutamine + 2 ATP + H2O = carbamoyl phosphate + L-glutamate + 2 ADP + phosphate + 2 H(+). The catalysed reaction is hydrogencarbonate + NH4(+) + 2 ATP = carbamoyl phosphate + 2 ADP + phosphate + 2 H(+). It functions in the pathway amino-acid biosynthesis; L-arginine biosynthesis; carbamoyl phosphate from bicarbonate: step 1/1. It participates in pyrimidine metabolism; UMP biosynthesis via de novo pathway; (S)-dihydroorotate from bicarbonate: step 1/3. Its function is as follows. Large subunit of the glutamine-dependent carbamoyl phosphate synthetase (CPSase). CPSase catalyzes the formation of carbamoyl phosphate from the ammonia moiety of glutamine, carbonate, and phosphate donated by ATP, constituting the first step of 2 biosynthetic pathways, one leading to arginine and/or urea and the other to pyrimidine nucleotides. The large subunit (synthetase) binds the substrates ammonia (free or transferred from glutamine from the small subunit), hydrogencarbonate and ATP and carries out an ATP-coupled ligase reaction, activating hydrogencarbonate by forming carboxy phosphate which reacts with ammonia to form carbamoyl phosphate. This Salmonella typhimurium (strain LT2 / SGSC1412 / ATCC 700720) protein is Carbamoyl phosphate synthase large chain.